The primary structure comprises 290 residues: MNEEEQFVSIDLNDDNICSVCKLGTDKDTLSFCHICFELNLEGVPKSNLLHTKSVRGHKDCFEKYHLIANQDCSRSKLSKSTYEGVKTIVSKKINWIVQYAQNKNLDLESECSKTSQHPLLNFRHKPEKKLLPQFDSQVPKYSAKGSAGNAGSISSYAQRILEHRENTDFRLGLLEDADALWTHSHSQAQKTEETSSGPEGTIQTQNPHYSREELNSMTLAEVVQLSAKLQQRIQEVFEELTHQVQEKDSLASELHVRHVAIEQLLKNCSKLPCLQVGRTGTRSHLPMNH.

Positions 185–206 (SHSQAQKTEETSSGPEGTIQTQ) are disordered. Positions 228-251 (AKLQQRIQEVFEELTHQVQEKDSL) form a coiled coil.

Belongs to the EURL family. Interacts with CCDC85B. In terms of tissue distribution, expressed in brain (at protein level). Expressed in neural progenitor cells and postmitotic neurons of the embryonic cerebral cortex.

In terms of biological role, plays a role in cortical progenitor cell proliferation and differentiation. Promotes dendritic spine development of post-migratory cortical projection neurons by modulating the beta-catenin signaling pathway. In Mus musculus (Mouse), this protein is Protein EURL homolog.